We begin with the raw amino-acid sequence, 207 residues long: MATSSDRLVWIDCEMTGLDLAVDELVEIAVVITDFDLNVLDPGLSIVIKPDASALDNMNDFVREMHTTSGLIEEIPGGVSLAEAEYEALEYVLRFAPAARTAPLAGNTIGTDRMFLAKYMPRLDTHLHYRNVDVSSIKELARRWFPRVYFNAPEKNGGHRALADILESVRELDYYRKAAFVAEPGPTTEQTQAASATIVEKWTARMG.

In terms of domain architecture, Exonuclease spans 8–172; it reads LVWIDCEMTG…ADILESVREL (165 aa). Tyr-129 is an active-site residue.

Belongs to the oligoribonuclease family.

It is found in the cytoplasm. Its function is as follows. 3'-to-5' exoribonuclease specific for small oligoribonucleotides. This chain is Oligoribonuclease, found in Leifsonia xyli subsp. xyli (strain CTCB07).